The chain runs to 447 residues: Glucose-6-phosphate isomerase (447 aa).

Residue glutamate 287 is the Proton donor of the active site. Active-site residues include histidine 308 and lysine 422.

Belongs to the GPI family.

The protein resides in the cytoplasm. It catalyses the reaction alpha-D-glucose 6-phosphate = beta-D-fructose 6-phosphate. The protein operates within carbohydrate biosynthesis; gluconeogenesis. It participates in carbohydrate degradation; glycolysis; D-glyceraldehyde 3-phosphate and glycerone phosphate from D-glucose: step 2/4. Catalyzes the reversible isomerization of glucose-6-phosphate to fructose-6-phosphate. The protein is Glucose-6-phosphate isomerase of Heliobacterium modesticaldum (strain ATCC 51547 / Ice1).